Consider the following 383-residue polypeptide: Dual-specificity RNA methyltransferase RlmN (383 aa).

E95 functions as the Proton acceptor in the catalytic mechanism. The Radical SAM core domain occupies 101–349 (EETRGTLCVS…TTVRKTRGDD (249 aa)). A disulfide bridge connects residues C108 and C354. [4Fe-4S] cluster contacts are provided by C115, C119, and C122. Residues 180-181 (GE), S212, 234-236 (SLH), and N311 contribute to the S-adenosyl-L-methionine site. The active-site S-methylcysteine intermediate is C354.

It belongs to the radical SAM superfamily. RlmN family. [4Fe-4S] cluster is required as a cofactor.

It is found in the cytoplasm. The enzyme catalyses adenosine(2503) in 23S rRNA + 2 reduced [2Fe-2S]-[ferredoxin] + 2 S-adenosyl-L-methionine = 2-methyladenosine(2503) in 23S rRNA + 5'-deoxyadenosine + L-methionine + 2 oxidized [2Fe-2S]-[ferredoxin] + S-adenosyl-L-homocysteine. It catalyses the reaction adenosine(37) in tRNA + 2 reduced [2Fe-2S]-[ferredoxin] + 2 S-adenosyl-L-methionine = 2-methyladenosine(37) in tRNA + 5'-deoxyadenosine + L-methionine + 2 oxidized [2Fe-2S]-[ferredoxin] + S-adenosyl-L-homocysteine. Functionally, specifically methylates position 2 of adenine 2503 in 23S rRNA and position 2 of adenine 37 in tRNAs. m2A2503 modification seems to play a crucial role in the proofreading step occurring at the peptidyl transferase center and thus would serve to optimize ribosomal fidelity. The polypeptide is Dual-specificity RNA methyltransferase RlmN (Paraburkholderia phytofirmans (strain DSM 17436 / LMG 22146 / PsJN) (Burkholderia phytofirmans)).